A 1360-amino-acid chain; its full sequence is DNA-directed RNA polymerase subunit beta (1360 aa).

This sequence belongs to the RNA polymerase beta chain family. As to quaternary structure, the RNAP catalytic core consists of 2 alpha, 1 beta, 1 beta' and 1 omega subunit. When a sigma factor is associated with the core the holoenzyme is formed, which can initiate transcription.

It carries out the reaction RNA(n) + a ribonucleoside 5'-triphosphate = RNA(n+1) + diphosphate. Functionally, DNA-dependent RNA polymerase catalyzes the transcription of DNA into RNA using the four ribonucleoside triphosphates as substrates. The chain is DNA-directed RNA polymerase subunit beta from Teredinibacter turnerae (strain ATCC 39867 / T7901).